The chain runs to 60 residues: Temporin-CG1 (60 aa).

The N-terminal stretch at 1-22 (MFTLKKSLLLLFFLATINLSLC) is a signal peptide. A propeptide spans 23-43 (EQERNAEEERRDDDERNAEVE) (removed in mature form).

As to expression, expressed by the skin glands.

The protein localises to the secreted. Its function is as follows. Antimicrobial peptide active against a variety of Gram-positive and some Gram-negative bacterial strains. Has antifungal activity against a slime mold isolate. Has weak hemolytic activity against human erythrocytes. This is Temporin-CG1 from Amolops chunganensis (Chungan torrent frog).